Consider the following 737-residue polypeptide: 1,4-alpha-glucan branching enzyme GlgB (737 aa).

Catalysis depends on aspartate 399, which acts as the Nucleophile. Residue glutamate 452 is the Proton donor of the active site.

This sequence belongs to the glycosyl hydrolase 13 family. GlgB subfamily. Monomer.

It carries out the reaction Transfers a segment of a (1-&gt;4)-alpha-D-glucan chain to a primary hydroxy group in a similar glucan chain.. It participates in glycan biosynthesis; glycogen biosynthesis. Functionally, catalyzes the formation of the alpha-1,6-glucosidic linkages in glycogen by scission of a 1,4-alpha-linked oligosaccharide from growing alpha-1,4-glucan chains and the subsequent attachment of the oligosaccharide to the alpha-1,6 position. In Chlamydia muridarum (strain MoPn / Nigg), this protein is 1,4-alpha-glucan branching enzyme GlgB.